A 130-amino-acid chain; its full sequence is Histone H2A type 2-B (130 aa).

Residues 1-22 (MSGRGKQGGKARAKAKSRSSRA) form a disordered region. S2 bears the N-acetylserine mark. A Phosphoserine; by RPS6KA5 modification is found at S2. The residue at position 4 (R4) is a Citrulline; alternate. The residue at position 4 (R4) is a Symmetric dimethylarginine; by PRMT5; alternate. K6 carries the post-translational modification N6-(2-hydroxyisobutyryl)lysine. Over residues 7–19 (QGGKARAKAKSRS) the composition is skewed to basic residues. The residue at position 10 (K10) is an N6-(2-hydroxyisobutyryl)lysine; alternate. N6-(beta-hydroxybutyryl)lysine; alternate is present on residues K10 and K14. K10 carries the post-translational modification N6-lactoyllysine; alternate. K10 carries the N6-succinyllysine; alternate modification. A Glycyl lysine isopeptide (Lys-Gly) (interchain with G-Cter in ubiquitin); alternate cross-link involves residue K14. K16 participates in a covalent cross-link: Glycyl lysine isopeptide (Lys-Gly) (interchain with G-Cter in ubiquitin). K37 is subject to N6-(2-hydroxyisobutyryl)lysine; alternate. K37 carries the N6-(beta-hydroxybutyryl)lysine; alternate modification. K37 bears the N6-crotonyllysine; alternate mark. N6-(2-hydroxyisobutyryl)lysine occurs at positions 75 and 76. An N6-(2-hydroxyisobutyryl)lysine; alternate modification is found at K96. An N6-(beta-hydroxybutyryl)lysine; alternate modification is found at K96. K96 carries the N6-succinyllysine; alternate modification. K96 is modified (N6-glutaryllysine; alternate). Position 105 is an N5-methylglutamine (Q105). Position 119 is an N6-(2-hydroxyisobutyryl)lysine; alternate (K119). An N6-(beta-hydroxybutyryl)lysine; alternate modification is found at K119. An N6-crotonyllysine; alternate mark is found at K119 and K120. 2 positions are modified to N6-glutaryllysine; alternate: K119 and K120. K120 participates in a covalent cross-link: Glycyl lysine isopeptide (Lys-Gly) (interchain with G-Cter in ubiquitin); alternate. T121 carries the phosphothreonine; by DCAF1 modification.

This sequence belongs to the histone H2A family. In terms of assembly, the nucleosome is a histone octamer containing two molecules each of H2A, H2B, H3 and H4 assembled in one H3-H4 heterotetramer and two H2A-H2B heterodimers. The octamer wraps approximately 147 bp of DNA. Post-translationally, deiminated on Arg-4 in granulocytes upon calcium entry. Monoubiquitination of Lys-120 (H2AK119Ub) by RING1, TRIM37 and RNF2/RING2 complex gives a specific tag for epigenetic transcriptional repression and participates in X chromosome inactivation of female mammals. It is involved in the initiation of both imprinted and random X inactivation. Ubiquitinated H2A is enriched in inactive X chromosome chromatin. Ubiquitination of H2A functions downstream of methylation of 'Lys-27' of histone H3 (H3K27me). H2AK119Ub by RNF2/RING2 can also be induced by ultraviolet and may be involved in DNA repair. Monoubiquitination of Lys-120 (H2AK119Ub) by TRIM37 may promote transformation of cells in a number of breast cancers. Following DNA double-strand breaks (DSBs), it is ubiquitinated through 'Lys-63' linkage of ubiquitin moieties by the E2 ligase UBE2N and the E3 ligases RNF8 and RNF168, leading to the recruitment of repair proteins to sites of DNA damage. Ubiquitination at Lys-14 and Lys-16 (H2AK13Ub and H2AK15Ub, respectively) in response to DNA damage is initiated by RNF168 that mediates monoubiquitination at these 2 sites, and 'Lys-63'-linked ubiquitin are then conjugated to monoubiquitin; RNF8 is able to extend 'Lys-63'-linked ubiquitin chains in vitro. Deubiquitinated by USP51 at Lys-14 and Lys-16 (H2AK13Ub and H2AK15Ub, respectively) after damaged DNA is repaired. H2AK119Ub and ionizing radiation-induced 'Lys-63'-linked ubiquitination (H2AK13Ub and H2AK15Ub) are distinct events. In terms of processing, phosphorylation on Ser-2 (H2AS1ph) is enhanced during mitosis. Phosphorylation on Ser-2 by RPS6KA5/MSK1 directly represses transcription. Acetylation of H3 inhibits Ser-2 phosphorylation by RPS6KA5/MSK1. Phosphorylation at Thr-121 (H2AT120ph) by DCAF1 is present in the regulatory region of many tumor suppresor genes and down-regulates their transcription. Post-translationally, symmetric dimethylation on Arg-4 by the PRDM1/PRMT5 complex may play a crucial role in the germ-cell lineage. Glutamine methylation at Gln-105 (H2AQ104me) by FBL is specifically dedicated to polymerase I. It is present at 35S ribosomal DNA locus and impairs binding of the FACT complex. In terms of processing, crotonylation (Kcr) is specifically present in male germ cells and marks testis-specific genes in post-meiotic cells, including X-linked genes that escape sex chromosome inactivation in haploid cells. Crotonylation marks active promoters and enhancers and confers resistance to transcriptional repressors. It is also associated with post-meiotically activated genes on autosomes. Post-translationally, lactylated in macrophages by EP300/P300 by using lactoyl-CoA directly derived from endogenous or exogenous lactate, leading to stimulates gene transcription.

The protein resides in the nucleus. It localises to the chromosome. Functionally, core component of nucleosome. Nucleosomes wrap and compact DNA into chromatin, limiting DNA accessibility to the cellular machineries which require DNA as a template. Histones thereby play a central role in transcription regulation, DNA repair, DNA replication and chromosomal stability. DNA accessibility is regulated via a complex set of post-translational modifications of histones, also called histone code, and nucleosome remodeling. The sequence is that of Histone H2A type 2-B from Homo sapiens (Human).